Here is a 177-residue protein sequence, read N- to C-terminus: Nucleoside triphosphate/diphosphate phosphatase (177 aa).

Arg-24 serves as the catalytic Proton donor. The Mg(2+) site is built by Asn-88, Asp-104, Asp-106, Asp-108, Asp-121, and Glu-124.

This sequence belongs to the Ntdp family. The cofactor is Mg(2+).

The catalysed reaction is a ribonucleoside 5'-triphosphate + H2O = a ribonucleoside 5'-diphosphate + phosphate + H(+). It catalyses the reaction a ribonucleoside 5'-diphosphate + H2O = a ribonucleoside 5'-phosphate + phosphate + H(+). Functionally, has nucleoside phosphatase activity towards nucleoside triphosphates and nucleoside diphosphates. The protein is Nucleoside triphosphate/diphosphate phosphatase of Geobacillus sp. (strain WCH70).